Here is a 283-residue protein sequence, read N- to C-terminus: Zinc finger protein 691 (283 aa).

A compositionally biased stretch (basic and acidic residues) spans 1–41 (MGSEKEQRPEAHLPEEGEGAKPWRVDGSKDSQITPREDHGQ). The segment at 1–68 (MGSEKEQRPE…KVTAQAGGPG (68 aa)) is disordered. The residue at position 43 (Ser43) is a Phosphoserine. A Glycyl lysine isopeptide (Lys-Gly) (interchain with G-Cter in SUMO2) cross-link involves residue Lys81. 7 consecutive C2H2-type zinc fingers follow at residues 83–105 (FICA…QRIH), 111–133 (YKCS…ERIH), 139–161 (YQCA…QQDH), 167–189 (YRCD…HRTH), 195–217 (YICC…HRTH), 223–245 (YECT…QRTH), and 251–273 (YRCT…QKTH).

The protein belongs to the krueppel C2H2-type zinc-finger protein family.

The protein resides in the nucleus. Its function is as follows. May be involved in transcriptional regulation. This chain is Zinc finger protein 691 (Znf691), found in Mus musculus (Mouse).